The primary structure comprises 151 residues: Mediator of RNA polymerase II transcription subunit 32 (151 aa).

A disordered region spans residues 128–151 (GVAPGSVHSSSTGFDSRFSEDSTQ).

The protein belongs to the mediator complex subunit 32 family. Oligomers. Component of the Mediator complex. Interacts with MED6. Interacts with GEBPL.

The protein localises to the nucleus. Its function is as follows. Component of the Mediator complex, a coactivator involved in the regulated transcription of nearly all RNA polymerase II-dependent genes. Mediator functions as a bridge to convey information from gene-specific regulatory proteins to the basal RNA polymerase II transcription machinery. The Mediator complex, having a compact conformation in its free form, is recruited to promoters by direct interactions with regulatory proteins and serves for the assembly of a functional pre-initiation complex with RNA polymerase II and the general transcription factors. This Arabidopsis thaliana (Mouse-ear cress) protein is Mediator of RNA polymerase II transcription subunit 32 (MED32).